The primary structure comprises 78 residues: Large ribosomal subunit protein bL28 (78 aa).

The protein belongs to the bacterial ribosomal protein bL28 family.

The polypeptide is Large ribosomal subunit protein bL28 (Acidithiobacillus ferrooxidans (strain ATCC 23270 / DSM 14882 / CIP 104768 / NCIMB 8455) (Ferrobacillus ferrooxidans (strain ATCC 23270))).